The chain runs to 63 residues: Large ribosomal subunit protein uL29 (63 aa).

Belongs to the universal ribosomal protein uL29 family.

The sequence is that of Large ribosomal subunit protein uL29 from Sulfurovum sp. (strain NBC37-1).